The chain runs to 221 residues: Interleukin-12 subunit alpha (221 aa).

Residues 1–25 form the signal peptide; that stretch reads MCPLRSLLLISTLVLLHHLPHLSLG. Intrachain disulfides connect Cys39–Cys112, Cys66–Cys198, and Cys87–Cys125. Residue Asn95 is glycosylated (N-linked (GlcNAc...) asparagine).

The protein belongs to the IL-6 superfamily. In terms of assembly, heterodimer with IL12B; disulfide-linked. This heterodimer is known as interleukin IL-12. Heterodimer with EBI3/IL27B; not disulfide-linked. This heterodimer is known as interleukin IL-35. Interacts with NBR1; this interaction promotes IL-12 secretion.

The protein resides in the secreted. In terms of biological role, heterodimerizes with IL12B to form the IL-12 cytokine or with EBI3/IL27B to form the IL-35 cytokine. IL-12 is primarily produced by professional antigen-presenting cells (APCs) such as B-cells and dendritic cells (DCs) as well as macrophages and granulocytes and regulates T-cell and natural killer-cell responses, induces the production of interferon-gamma (IFN-gamma), favors the differentiation of T-helper 1 (Th1) cells and is an important link between innate resistance and adaptive immunity. Mechanistically, exerts its biological effects through a receptor composed of IL12R1 and IL12R2 subunits. Binding to the receptor results in the rapid tyrosine phosphorylation of a number of cellular substrates including the JAK family kinases TYK2 and JAK2. In turn, recruited STAT4 gets phosphorylated and translocates to the nucleus where it regulates cytokine/growth factor responsive genes. As part of IL-35, plays essential roles in maintaining the immune homeostasis of the liver microenvironment and also functions as an immune-suppressive cytokine. Mediates biological events through unconventional receptors composed of IL12RB2 and gp130/IL6ST heterodimers or homodimers. Signaling requires the transcription factors STAT1 and STAT4, which form a unique heterodimer that binds to distinct DNA sites. The polypeptide is Interleukin-12 subunit alpha (IL12A) (Capra hircus (Goat)).